Consider the following 692-residue polypeptide: PTS system glucoside-specific EIICBA component (692 aa).

One can recognise a PTS EIIC type-1 domain in the interval 6-430 (KKFFGQLQRI…LNLKTPGRED (425 aa)). Helical transmembrane passes span 15–35 (IGKA…LLTF), 84–104 (LGLA…YLIM), 140–160 (LVLG…IGAL), 185–205 (FVPI…SFVW), 215–235 (LSNF…GIIE), 287–307 (AFTT…AFAI), 318–338 (VVGG…ITEP), 344–364 (LFVA…SFLI), 370–390 (VQIG…GLLS), and 398–418 (LVIP…TFLI). One can recognise a PTS EIIB type-1 domain in the interval 441 to 522 (SELPFEVLEA…QQIMDGKITS (82 aa)). Cys-463 acts as the Phosphocysteine intermediate; for EIIB activity in catalysis. Residues 563–667 (DKVFSAKMMG…DTITPIIITN (105 aa)) enclose the PTS EIIA type-1 domain. Catalysis depends on His-615, which acts as the Tele-phosphohistidine intermediate; for EIIA activity.

It localises to the cell membrane. Its activity is regulated as follows. Inhibited by methyl alpha-D-glucoside, methyl beta-D-glucoside, p-nitrophenyl alpha-D-glucoside, o-nitrophenyl beta-D-glucoside and salicin, but not by 2-deoxyglucose. In terms of biological role, the phosphoenolpyruvate-dependent sugar phosphotransferase system (sugar PTS), a major carbohydrate active -transport system, catalyzes the phosphorylation of incoming sugar substrates concomitantly with their translocation across the cell membrane. This system is involved in alpha- and beta-glucoside transport. Can also transport glucose, but not galactose, fructose, mannose, cellobiose, sucrose, maltose, lactose, melibiose and trehalose, as well as N-acetylglucosamine. This Staphylococcus carnosus (strain TM300) protein is PTS system glucoside-specific EIICBA component (glcB).